The following is a 110-amino-acid chain: Large ribosomal subunit protein uL22 (110 aa).

It belongs to the universal ribosomal protein uL22 family. In terms of assembly, part of the 50S ribosomal subunit.

In terms of biological role, this protein binds specifically to 23S rRNA; its binding is stimulated by other ribosomal proteins, e.g. L4, L17, and L20. It is important during the early stages of 50S assembly. It makes multiple contacts with different domains of the 23S rRNA in the assembled 50S subunit and ribosome. The globular domain of the protein is located near the polypeptide exit tunnel on the outside of the subunit, while an extended beta-hairpin is found that lines the wall of the exit tunnel in the center of the 70S ribosome. The polypeptide is Large ribosomal subunit protein uL22 (Chromohalobacter salexigens (strain ATCC BAA-138 / DSM 3043 / CIP 106854 / NCIMB 13768 / 1H11)).